A 183-amino-acid polypeptide reads, in one-letter code: Probable chemoreceptor glutamine deamidase CheD (183 aa).

Belongs to the CheD family.

The enzyme catalyses L-glutaminyl-[protein] + H2O = L-glutamyl-[protein] + NH4(+). Its function is as follows. Probably deamidates glutamine residues to glutamate on methyl-accepting chemotaxis receptors (MCPs), playing an important role in chemotaxis. The chain is Probable chemoreceptor glutamine deamidase CheD from Zymomonas mobilis subsp. mobilis (strain ATCC 31821 / ZM4 / CP4).